Reading from the N-terminus, the 394-residue chain is Elongation factor Tu (394 aa).

Residues lysine 10–glutamate 204 enclose the tr-type G domain. The segment at glycine 19 to threonine 26 is G1. Glycine 19–threonine 26 serves as a coordination point for GTP. Mg(2+) is bound at residue threonine 26. Residues glycine 60–serine 64 form a G2 region. The interval aspartate 81–glycine 84 is G3. Residues aspartate 81–histidine 85 and asparagine 136–aspartate 139 contribute to the GTP site. The G4 stretch occupies residues asparagine 136 to aspartate 139. Residues serine 174–leucine 176 are G5.

The protein belongs to the TRAFAC class translation factor GTPase superfamily. Classic translation factor GTPase family. EF-Tu/EF-1A subfamily. In terms of assembly, monomer.

Its subcellular location is the cytoplasm. The enzyme catalyses GTP + H2O = GDP + phosphate + H(+). GTP hydrolase that promotes the GTP-dependent binding of aminoacyl-tRNA to the A-site of ribosomes during protein biosynthesis. This Pseudoalteromonas atlantica (strain T6c / ATCC BAA-1087) protein is Elongation factor Tu.